The chain runs to 1009 residues: Type VII secretion system accessory factor EsaA (1009 aa).

A helical membrane pass occupies residues 7–27; it reads IYALIVTLIIIIAIVSMIFFV. Basic and acidic residues predominate over residues 680-697; it reads TFAEEPQEPKIDKGKNDE. The tract at residues 680–707 is disordered; it reads TFAEEPQEPKIDKGKNDEFNTMSSNLDK. 5 consecutive transmembrane segments (helical) span residues 822-842, 869-889, 903-923, 928-948, and 979-999; these read ISPTLFVLLMYLLSMITAYIF, VITSGVIGTTGLVEGLIVGLI, KFILMVILTMMVFVLINTYLL, SIGMFLMIAALGLYFVAMNNL, and IGLVLVILTVLVIIGFVLNMF.

The protein belongs to the EsaA family. As to quaternary structure, homodimer. Interacts with EssB.

The protein resides in the cell membrane. Component of the type VII secretion system (Ess). Provides together with EssB and other components such as EssC and EssE a secretion plateform accross the cytoplasmic membrane in the host. This Staphylococcus aureus (strain USA300) protein is Type VII secretion system accessory factor EsaA.